The following is a 22-amino-acid chain: Brevinin-1OKd (22 aa).

Lys-22 carries the post-translational modification Lysine amide.

In terms of tissue distribution, expressed by the skin glands.

It localises to the secreted. In terms of biological role, antimicrobial peptide. The chain is Brevinin-1OKd from Nidirana okinavana (Kampira Falls frog).